Consider the following 440-residue polypeptide: Ribulose bisphosphate carboxylase large chain (440 aa).

K4 carries the post-translational modification N6,N6,N6-trimethyllysine. Substrate contacts are provided by N113 and T163. The active-site Proton acceptor is K165. K167 is a binding site for substrate. K191, D193, and E194 together coordinate Mg(2+). K191 carries the N6-carboxylysine modification. H284 functions as the Proton acceptor in the catalytic mechanism. Positions 285, 317, and 369 each coordinate substrate.

The protein belongs to the RuBisCO large chain family. Type I subfamily. In terms of assembly, heterohexadecamer of 8 large chains and 8 small chains; disulfide-linked. The disulfide link is formed within the large subunit homodimers. Mg(2+) serves as cofactor. In terms of processing, the disulfide bond which can form in the large chain dimeric partners within the hexadecamer appears to be associated with oxidative stress and protein turnover.

It is found in the plastid. The protein localises to the chloroplast. It carries out the reaction 2 (2R)-3-phosphoglycerate + 2 H(+) = D-ribulose 1,5-bisphosphate + CO2 + H2O. It catalyses the reaction D-ribulose 1,5-bisphosphate + O2 = 2-phosphoglycolate + (2R)-3-phosphoglycerate + 2 H(+). Functionally, ruBisCO catalyzes two reactions: the carboxylation of D-ribulose 1,5-bisphosphate, the primary event in carbon dioxide fixation, as well as the oxidative fragmentation of the pentose substrate in the photorespiration process. Both reactions occur simultaneously and in competition at the same active site. In Onoclea sensibilis (Sensitive fern), this protein is Ribulose bisphosphate carboxylase large chain.